Here is a 274-residue protein sequence, read N- to C-terminus: Thiazole synthase (274 aa).

The active-site Schiff-base intermediate with DXP is K115. Residues G176, 202 to 203, and 224 to 225 contribute to the 1-deoxy-D-xylulose 5-phosphate site; these read AG and NS.

It belongs to the ThiG family. Homotetramer. Forms heterodimers with either ThiH or ThiS.

It localises to the cytoplasm. It catalyses the reaction [ThiS sulfur-carrier protein]-C-terminal-Gly-aminoethanethioate + 2-iminoacetate + 1-deoxy-D-xylulose 5-phosphate = [ThiS sulfur-carrier protein]-C-terminal Gly-Gly + 2-[(2R,5Z)-2-carboxy-4-methylthiazol-5(2H)-ylidene]ethyl phosphate + 2 H2O + H(+). The protein operates within cofactor biosynthesis; thiamine diphosphate biosynthesis. In terms of biological role, catalyzes the rearrangement of 1-deoxy-D-xylulose 5-phosphate (DXP) to produce the thiazole phosphate moiety of thiamine. Sulfur is provided by the thiocarboxylate moiety of the carrier protein ThiS. In vitro, sulfur can be provided by H(2)S. The protein is Thiazole synthase of Psychrobacter arcticus (strain DSM 17307 / VKM B-2377 / 273-4).